The chain runs to 333 residues: Lipoyl synthase (333 aa).

Residues cysteine 56, cysteine 61, cysteine 67, cysteine 82, cysteine 86, cysteine 89, and serine 293 each coordinate [4Fe-4S] cluster. One can recognise a Radical SAM core domain in the interval 68-282 (WEDREATFLI…GRVGAELGFS (215 aa)). A disordered region spans residues 301–333 (QQAMTARDQDRSEMSVPPESVSENSHGQRPSPW). Over residues 314–325 (MSVPPESVSENS) the composition is skewed to low complexity.

This sequence belongs to the radical SAM superfamily. Lipoyl synthase family. The cofactor is [4Fe-4S] cluster.

It is found in the cytoplasm. It carries out the reaction [[Fe-S] cluster scaffold protein carrying a second [4Fe-4S](2+) cluster] + N(6)-octanoyl-L-lysyl-[protein] + 2 oxidized [2Fe-2S]-[ferredoxin] + 2 S-adenosyl-L-methionine + 4 H(+) = [[Fe-S] cluster scaffold protein] + N(6)-[(R)-dihydrolipoyl]-L-lysyl-[protein] + 4 Fe(3+) + 2 hydrogen sulfide + 2 5'-deoxyadenosine + 2 L-methionine + 2 reduced [2Fe-2S]-[ferredoxin]. It participates in protein modification; protein lipoylation via endogenous pathway; protein N(6)-(lipoyl)lysine from octanoyl-[acyl-carrier-protein]: step 2/2. In terms of biological role, catalyzes the radical-mediated insertion of two sulfur atoms into the C-6 and C-8 positions of the octanoyl moiety bound to the lipoyl domains of lipoate-dependent enzymes, thereby converting the octanoylated domains into lipoylated derivatives. This Frankia casuarinae (strain DSM 45818 / CECT 9043 / HFP020203 / CcI3) protein is Lipoyl synthase.